Here is a 124-residue protein sequence, read N- to C-terminus: Small ribosomal subunit protein uS12 (124 aa).

Residues 1 to 28 form a disordered region; it reads MPTINQLVRKGRTPKVSKTKAPALKGSP. A compositionally biased stretch (basic residues) spans 9–18; it reads RKGRTPKVSK. D89 carries the 3-methylthioaspartic acid modification.

This sequence belongs to the universal ribosomal protein uS12 family. In terms of assembly, part of the 30S ribosomal subunit. Contacts proteins S8 and S17. May interact with IF1 in the 30S initiation complex.

Functionally, with S4 and S5 plays an important role in translational accuracy. In terms of biological role, interacts with and stabilizes bases of the 16S rRNA that are involved in tRNA selection in the A site and with the mRNA backbone. Located at the interface of the 30S and 50S subunits, it traverses the body of the 30S subunit contacting proteins on the other side and probably holding the rRNA structure together. The combined cluster of proteins S8, S12 and S17 appears to hold together the shoulder and platform of the 30S subunit. The sequence is that of Small ribosomal subunit protein uS12 from Paenarthrobacter aurescens (strain TC1).